We begin with the raw amino-acid sequence, 207 residues long: Fibroblast growth factor 18 (207 aa).

The signal sequence occupies residues 1 to 27 (MYSAPSACTCLCLHFLLLCFQVQVLAA). Residue Asn-39 is glycosylated (N-linked (GlcNAc...) asparagine). Cys-109 and Cys-127 are joined by a disulfide. The N-linked (GlcNAc...) asparagine glycan is linked to Asn-137.

It belongs to the heparin-binding growth factors family. In terms of assembly, interacts with FGFR3 and FGFR4.

The protein resides in the secreted. Plays an important role in the regulation of cell proliferation, cell differentiation and cell migration. Required for normal ossification and bone development. Stimulates hepatic and intestinal proliferation. This chain is Fibroblast growth factor 18 (Fgf18), found in Mus musculus (Mouse).